A 1289-amino-acid polypeptide reads, in one-letter code: DNA-directed RNA polymerase subunit beta (1289 aa).

The protein belongs to the RNA polymerase beta chain family. As to quaternary structure, the RNAP catalytic core consists of 2 alpha, 1 beta, 1 beta' and 1 omega subunit. When a sigma factor is associated with the core the holoenzyme is formed, which can initiate transcription.

The catalysed reaction is RNA(n) + a ribonucleoside 5'-triphosphate = RNA(n+1) + diphosphate. Functionally, DNA-dependent RNA polymerase catalyzes the transcription of DNA into RNA using the four ribonucleoside triphosphates as substrates. This chain is DNA-directed RNA polymerase subunit beta, found in Methylacidiphilum infernorum (isolate V4) (Methylokorus infernorum (strain V4)).